Consider the following 151-residue polypeptide: UPF0178 protein CJA_1978 (151 aa).

It belongs to the UPF0178 family.

In Cellvibrio japonicus (strain Ueda107) (Pseudomonas fluorescens subsp. cellulosa), this protein is UPF0178 protein CJA_1978.